Consider the following 457-residue polypeptide: Keratin, type II cytoskeletal 7 (457 aa).

N-acetylserine is present on Ser-2. Ser-2 is subject to Phosphoserine. The head stretch occupies residues 2–84 (SIHFSSRSTA…DPTIQQVRQE (83 aa)). Ser-7 is a glycosylation site (O-linked (GlcNAc) serine). Arg-15 carries the dimethylated arginine; alternate modification. The residue at position 15 (Arg-15) is an Omega-N-methylarginine; alternate. Phosphoserine occurs at positions 47 and 65. Residues 84 to 120 (EEREQIKTLNNKFASFIDKVRFLEQQNKMLETKWALL) are coil 1A. Positions 85-397 (EREQIKTLNN…KLLEGEESRL (313 aa)) constitute an IF rod domain. Thr-91 bears the Phosphothreonine mark. A linker 1 region spans residues 121-138 (QEQKSAKSSQLPRIFEAQ). Lys-124 participates in a covalent cross-link: Glycyl lysine isopeptide (Lys-Gly) (interchain with G-Cter in SUMO2). The tract at residues 139-230 (IAGLRQQLET…TLHETELAEL (92 aa)) is coil 1B. Lys-173 carries the N6-acetyllysine modification. 3 positions are modified to phosphoserine: Ser-211, Ser-246, and Ser-248. The interval 231 to 254 (QSQISDTSVVLSMDNSRSLDLDGI) is linker 12. Residues 255–393 (IADVKAQYEE…ATYRKLLEGE (139 aa)) form a coil 2 region. Glycyl lysine isopeptide (Lys-Gly) (interchain with G-Cter in SUMO2) cross-links involve residues Lys-259 and Lys-280. Thr-283 bears the Phosphothreonine mark. Residues Lys-290 and Lys-325 each participate in a glycyl lysine isopeptide (Lys-Gly) (interchain with G-Cter in SUMO2) cross-link. Residues 394–457 (ESRLSGDGMG…TSTTRRGTHN (64 aa)) are tail.

Belongs to the intermediate filament family. As to quaternary structure, heterotetramer of two type I and two type II keratins. Interacts with eukaryotic translation initiator factor 3 (eIF3) subunit EIF3S10. Interacts with GPER1. In terms of processing, arg-15 is dimethylated, probably to asymmetric dimethylarginine. Expressed in most simple epithelia tested including liver, lactating mammary gland, lung, kidney, stomach, duodenum, colon, oviduct, uterus, pancreas, epididymis, prostate, preputial gland and mesothelium, and in most stratified epithelia tested including dorsal skin, paw/toe, tail, tongue, cervix, forestomach, and bladder. Also expressed in Henle layer of the inner root sheath of whisker follicle.

Its function is as follows. Blocks interferon-dependent interphase and stimulates DNA synthesis in cells. In Mus musculus (Mouse), this protein is Keratin, type II cytoskeletal 7.